The sequence spans 173 residues: NADH-ubiquinone oxidoreductase chain 6 (173 aa).

5 consecutive transmembrane segments (helical) span residues 1–21 (MTYF…AVAS), 27–47 (YGVV…LSLG), 48–68 (VSFV…VVFV), 87–107 (VVGY…VGGF), and 139–159 (CGVG…FVVL).

The protein belongs to the complex I subunit 6 family.

It localises to the mitochondrion membrane. It catalyses the reaction a ubiquinone + NADH + 5 H(+)(in) = a ubiquinol + NAD(+) + 4 H(+)(out). Functionally, core subunit of the mitochondrial membrane respiratory chain NADH dehydrogenase (Complex I) that is believed to belong to the minimal assembly required for catalysis. Complex I functions in the transfer of electrons from NADH to the respiratory chain. The immediate electron acceptor for the enzyme is believed to be ubiquinone. This chain is NADH-ubiquinone oxidoreductase chain 6 (MT-ND6), found in Ptychoramphus aleuticus (Cassin's auklet).